We begin with the raw amino-acid sequence, 177 residues long: Small ribosomal subunit protein bS16 (177 aa).

Residues 80 to 177 (GIIAMPANGS…AAEAPKEEAK (98 aa)) form a disordered region. The segment covering 107–122 (AAPAAAPKAEAAPAAE) has biased composition (low complexity).

This sequence belongs to the bacterial ribosomal protein bS16 family.

The polypeptide is Small ribosomal subunit protein bS16 (Pelagibacter ubique (strain HTCC1062)).